The following is a 121-amino-acid chain: Large ribosomal subunit protein uL14c (121 aa).

In terms of assembly, component of the chloroplast large ribosomal subunit (LSU). Mature 70S chloroplast ribosomes of higher plants consist of a small (30S) and a large (50S) subunit. The 30S small subunit contains 1 molecule of ribosomal RNA (16S rRNA) and 24 different proteins. The 50S large subunit contains 3 rRNA molecules (23S, 5S and 4.5S rRNA) and 33 different proteins.

The protein localises to the plastid. It localises to the chloroplast. Its function is as follows. Component of the chloroplast ribosome (chloro-ribosome), a dedicated translation machinery responsible for the synthesis of chloroplast genome-encoded proteins, including proteins of the transcription and translation machinery and components of the photosynthetic apparatus. This chain is Large ribosomal subunit protein uL14c, found in Spinacia oleracea (Spinach).